The sequence spans 237 residues: Coat protein (237 aa).

The segment at 1-24 (MSAPASTTQPIGSTTSTTTKTAGA) is disordered.

The protein belongs to the potexvirus capsid protein family.

The protein localises to the virion. Its function is as follows. Required for genome encapsidation. Forms ribonucleoprotein complexes along with TGB1 helicase and viral RNA. This chain is Coat protein, found in Potato virus X (strain UK3) (PVX).